The chain runs to 437 residues: Tol-Pal system protein TolB (437 aa).

A signal peptide spans 1–30 (MLPTPSRSHKLSGYAAVLFFLWLVCSPAQA). The segment covering 410-423 (SDGRTRQQLSTQTG) has biased composition (polar residues). A disordered region spans residues 410-437 (SDGRTRQQLSTQTGDIREPAWGPLRRLQ).

Belongs to the TolB family. As to quaternary structure, the Tol-Pal system is composed of five core proteins: the inner membrane proteins TolA, TolQ and TolR, the periplasmic protein TolB and the outer membrane protein Pal. They form a network linking the inner and outer membranes and the peptidoglycan layer.

It localises to the periplasm. Part of the Tol-Pal system, which plays a role in outer membrane invagination during cell division and is important for maintaining outer membrane integrity. In Nitrosospira multiformis (strain ATCC 25196 / NCIMB 11849 / C 71), this protein is Tol-Pal system protein TolB.